The sequence spans 347 residues: NADH-ubiquinone oxidoreductase chain 2 (347 aa).

10 consecutive transmembrane segments (helical) span residues 3–23 (PMIF…VMMS), 25–45 (HWFM…PVLM), 59–79 (YFLT…INLM), 96–116 (MLIT…FWVP), 122–142 (IPLS…LSLL), 149–169 (INME…GWGG), 201–221 (SFLN…LLIF), 239–259 (IIAT…PLTG), 274–294 (NSTI…FFYI), and 326–346 (ILPL…FLML).

This sequence belongs to the complex I subunit 2 family. Core subunit of respiratory chain NADH dehydrogenase (Complex I) which is composed of 45 different subunits. Interacts with TMEM242.

The protein resides in the mitochondrion inner membrane. The catalysed reaction is a ubiquinone + NADH + 5 H(+)(in) = a ubiquinol + NAD(+) + 4 H(+)(out). In terms of biological role, core subunit of the mitochondrial membrane respiratory chain NADH dehydrogenase (Complex I) that is believed to belong to the minimal assembly required for catalysis. Complex I functions in the transfer of electrons from NADH to the respiratory chain. The immediate electron acceptor for the enzyme is believed to be ubiquinone. The protein is NADH-ubiquinone oxidoreductase chain 2 of Crocidura hildegardeae (Hildegarde's shrew).